We begin with the raw amino-acid sequence, 975 residues long: FHF complex subunit HOOK-interacting protein 1B (975 aa).

The tract at residues 465-496 (APSPPRPEHASWARGPGSPSVDSSSVVTVPRP) is disordered. Residue Ser-467 is modified to Phosphoserine. Residues 482 to 496 (SPSVDSSSVVTVPRP) are compositionally biased toward low complexity. Phosphoserine is present on residues Ser-510, Ser-523, Ser-529, and Ser-533. Disordered stretches follow at residues 511 to 548 (LGGS…GELE), 573 to 621 (SAPY…GLAV), and 690 to 717 (SNGG…SFTC). Over residues 527–538 (TASPTSSPSRRP) the composition is skewed to low complexity. Basic and acidic residues predominate over residues 597–608 (LLPEEDRDNVRE). Ser-863 bears the Phosphoserine mark. A Phosphothreonine modification is found at Thr-892. Position 900 is a phosphoserine (Ser-900).

Belongs to the FHIP family. As to quaternary structure, component of the FTS/Hook/FHIP complex (FHF complex), composed of AKTIP/FTS, FHIP1B, and one or more members of the Hook family of proteins HOOK1, HOOK2, and HOOK3. The FHF complex associates with the homotypic vesicular sorting complex (the HOPS complex).

In terms of biological role, component of the FTS/Hook/FHIP complex (FHF complex). The FHF complex may function to promote vesicle trafficking and/or fusion via the homotypic vesicular protein sorting complex (the HOPS complex). FHF complex promotes the distribution of AP-4 complex to the perinuclear area of the cell. The protein is FHF complex subunit HOOK-interacting protein 1B of Mus musculus (Mouse).